We begin with the raw amino-acid sequence, 126 residues long: MVRTMLQGKLHRVKVTQSDLNYEGSCAIDQDFLNAAGILQYEAIDIYNVDNGQRFSTYAIAAEPGSKIISVNGAAARCACVGDTLIICSYVQIPDEQARTHHPRVVYFEGANQMKRLAKSVPVQVA.

Catalysis depends on S25, which acts as the Schiff-base intermediate with substrate; via pyruvic acid. A Pyruvic acid (Ser) modification is found at S25. T57 serves as a coordination point for substrate. Y58 acts as the Proton donor in catalysis. 73 to 75 (GAA) lines the substrate pocket.

This sequence belongs to the PanD family. Heterooctamer of four alpha and four beta subunits. Pyruvate is required as a cofactor. Post-translationally, is synthesized initially as an inactive proenzyme, which is activated by self-cleavage at a specific serine bond to produce a beta-subunit with a hydroxyl group at its C-terminus and an alpha-subunit with a pyruvoyl group at its N-terminus.

Its subcellular location is the cytoplasm. The catalysed reaction is L-aspartate + H(+) = beta-alanine + CO2. It participates in cofactor biosynthesis; (R)-pantothenate biosynthesis; beta-alanine from L-aspartate: step 1/1. In terms of biological role, catalyzes the pyruvoyl-dependent decarboxylation of aspartate to produce beta-alanine. This chain is Aspartate 1-decarboxylase, found in Edwardsiella ictaluri (strain 93-146).